The chain runs to 101 residues: Capsid assembly scaffolding protein (101 aa).

The disordered stretch occupies residues 1-24 (MPMERDSHEEILNKLNDPELEHSE). Residues 79–99 (EEIKQEELSETITIEDLEKQA) adopt a coiled-coil conformation.

Belongs to the phi29likevirus scaffolding protein family. In terms of assembly, homodimer. Interacts non-specifically with DNA; probably binds DNA in the early stages of DNA packaging.

In terms of biological role, scaffolding protein involved in the icosahedric procapsid assembly. Coassembles with the capsid proteins to form the procapsid. The scaffolding protein is found within the capsid as a serie of concentric shells. During DNA packaging, the scaffolding protein molecules are released from the procapsid. This is Capsid assembly scaffolding protein (7) from Bacillus subtilis (Bacteriophage B103).